Consider the following 279-residue polypeptide: MTERFDCHHCNESLFGKKYILREESPYCVVCFETLFANTCEECGKPIGCDCKDLSYKDRHWHEACFHCSQCRNSLVDKPFAAKEDQLLCTDCYSNEYSSKCQECKKTIMPGTRKMEYKGSSWHETCFICHRCQQPIGTKSFIPKDNQNFCVPCYEKQHAMQCVQCKKPITTGGVTYREQPWHKECFVCTACRKQLSGQRFTARDDFAYCLNCFCDLYAKKCAGCTNPISGLGGTKYISFEERQWHNDCFNCKKCSLSLVGRGFLTERDDILCPDCGKDI.

The C4-type zinc finger occupies 7–31 (CHHCNESLFGKKYILREESPYCVVC). LIM zinc-binding domains are found at residues 40-92 (CEEC…CTDC), 101-153 (CQEC…CVPC), and 162-212 (CVQC…CLNC). A Glycyl lysine isopeptide (Lys-Gly) (interchain with G-Cter in SUMO2) cross-link involves residue Lys-78. Residues Lys-167 and Lys-220 each participate in a glycyl lysine isopeptide (Lys-Gly) (interchain with G-Cter in SUMO2) cross-link. Positions 221–275 (CAGCTNPISGLGGTKYISFEERQWHNDCFNCKKCSLSLVGRGFLTERDDILCPDC) constitute an LIM zinc-binding 4 domain. Ser-238 carries the post-translational modification Phosphoserine.

Interacts with ZNF638 and TTN/titin. Interacts with E4F1. Interacts with GRB7. Interacts with SIRT1 and FOXO1. Interacts with CEFIP. Interacts with calcineurin. Interacts with FOXK1. Expressed in skeletal muscle and heart.

The protein resides in the cytoplasm. It localises to the nucleus. It is found in the myofibril. The protein localises to the sarcomere. Its subcellular location is the z line. In terms of biological role, may function as a molecular transmitter linking various signaling pathways to transcriptional regulation. Negatively regulates the transcriptional repressor E4F1 and may function in cell growth. Inhibits the transcriptional activity of FOXO1 and its apoptotic function by enhancing the interaction of FOXO1 with SIRT1 and FOXO1 deacetylation. Negatively regulates the calcineurin/NFAT signaling pathway in cardiomyocytes. In Homo sapiens (Human), this protein is Four and a half LIM domains protein 2 (FHL2).